Here is a 1360-residue protein sequence, read N- to C-terminus: NAD(+) hydrolase sarm1 (1360 aa).

Residues 27–52 (RITGGPGSISTTSASAITAPSTMSQT) form a disordered region. Residues 34–48 (SISTTSASAITAPST) are compositionally biased toward low complexity. 2 consecutive SAM domains span residues 690–754 (WSVE…LKRM) and 760–828 (KDTA…NSLP). Positions 837-981 (KTLDVFVSYR…KLERFLRGEK (145 aa)) constitute a TIR domain. Residues 846–847 (RR) and Glu876 contribute to the NAD(+) site. Residue Glu919 is part of the active site. Positions 997–1010 (VSYQRMHSNDSDYQ) are enriched in polar residues. 5 disordered regions span residues 997-1026 (VSYQRMHSNDSDYQSGGAGAGSGAGTGGGG), 1046-1085 (GQANHQANRYRQSPSPARQRGSTSQLSGYSRAPSKRSQIL), 1121-1148 (SAAGLGHGSGSGMGSGYRSHSVDGLLDQ), 1192-1217 (NDSVTRRDKHTLSPPGNVQQHRKSRS), and 1249-1343 (IPMT…GNNK). The span at 1012 to 1026 (GGAGAGSGAGTGGGG) shows a compositional bias: gly residues. Over residues 1046-1073 (GQANHQANRYRQSPSPARQRGSTSQLSG) the composition is skewed to polar residues. Gly residues predominate over residues 1125 to 1135 (LGHGSGSGMGS). Low complexity predominate over residues 1321–1335 (SLTSNKTSNSSLGSN).

It belongs to the SARM1 family. In terms of tissue distribution, widely expressed in larval brains and adult brains.

Its subcellular location is the cytoplasm. The protein localises to the cell projection. The protein resides in the axon. The enzyme catalyses NAD(+) + H2O = ADP-D-ribose + nicotinamide + H(+). The catalysed reaction is NAD(+) = cyclic ADP-beta-D-ribose + nicotinamide + H(+). Its function is as follows. NAD(+) hydrolase, which plays a key role in axonal degeneration following injury by regulating NAD(+) metabolism. Acts as a negative regulator of MYD88- and TRIF-dependent toll-like receptor signaling pathway by promoting Wallerian degeneration, an injury-induced form of programmed subcellular death which involves degeneration of an axon distal to the injury site. Wallerian degeneration is triggered by NAD(+) depletion: in response to injury, it is activated and catalyzes cleavage of NAD(+) into ADP-D-ribose (ADPR), cyclic ADPR (cADPR) and nicotinamide; NAD(+) cleavage promoting axon destruction. Involved in the down-regulation of the tracheal immune response to Gram-negative bacteria. This is likely by mediating Tollo signaling in the tracheal epithelium. The chain is NAD(+) hydrolase sarm1 from Drosophila melanogaster (Fruit fly).